The sequence spans 126 residues: SGSCTVKTCWMRLPTFRTVGNLLKERFDGASRVIYGNKGSNRASRADMRHLEPEDPAHKPHSPQDLVYFERSPNFCAANSKVGTAGTTGRACNNTSLGLDGCDLLCCGRGFRTLTERVTERCHCTF.

S1 carries the O-palmitoleoyl serine; by PORCN lipid modification. C92 and C107 are joined by a disulfide. N-linked (GlcNAc...) asparagine glycans are attached at residues N93 and N94.

The protein belongs to the Wnt family. In terms of processing, palmitoleoylation is required for efficient binding to frizzled receptors. Palmitoleoylation is necessary for proper trafficking to cell surface. Depalmitoleoylated by NOTUM, leading to inhibit Wnt signaling pathway.

The protein resides in the secreted. Its subcellular location is the extracellular space. The protein localises to the extracellular matrix. In terms of biological role, ligand for members of the frizzled family of seven transmembrane receptors. Probable developmental protein. The sequence is that of Protein Wnt-1 (WNT-1) from Alopias vulpinus (Common thresher shark).